The sequence spans 663 residues: UvrABC system protein B (663 aa).

The Helicase ATP-binding domain maps to 31-271; sequence DNIESGEKAQ…EQSISKIQAE (241 aa). 44–51 provides a ligand contact to ATP; the sequence is GATGTGKT. A Beta-hairpin motif is present at residues 97–120; the sequence is YYDYYQPEAYVPSSDTYIEKDSSV. In terms of domain architecture, Helicase C-terminal spans 435–601; the sequence is QMDDLLGEIN…TIKKDIRDLI (167 aa). Residues 627–662 form the UVR domain; it reads QEAIKQLQKNMQEAAELLDFELAAQLRDLILELKAI.

The protein belongs to the UvrB family. Forms a heterotetramer with UvrA during the search for lesions. Interacts with UvrC in an incision complex.

It is found in the cytoplasm. The UvrABC repair system catalyzes the recognition and processing of DNA lesions. A damage recognition complex composed of 2 UvrA and 2 UvrB subunits scans DNA for abnormalities. Upon binding of the UvrA(2)B(2) complex to a putative damaged site, the DNA wraps around one UvrB monomer. DNA wrap is dependent on ATP binding by UvrB and probably causes local melting of the DNA helix, facilitating insertion of UvrB beta-hairpin between the DNA strands. Then UvrB probes one DNA strand for the presence of a lesion. If a lesion is found the UvrA subunits dissociate and the UvrB-DNA preincision complex is formed. This complex is subsequently bound by UvrC and the second UvrB is released. If no lesion is found, the DNA wraps around the other UvrB subunit that will check the other stand for damage. This is UvrABC system protein B from Streptococcus equi subsp. zooepidemicus (strain MGCS10565).